The following is a 436-amino-acid chain: uncharacterized protein (436 aa).

An N-terminal signal peptide occupies residues 1 to 20 (MKCAVAILLVCLTLQQAAYG). Coiled-coil stretches lie at residues 25 to 87 (EEVK…ALRN), 154 to 207 (MRKT…NSVE), and 247 to 329 (ESWG…ASLL). A compositionally biased stretch (acidic residues) spans 371–390 (EEEIAPSTEEDGSEELEADS). Residues 371–419 (EEEIAPSTEEDGSEELEADSYDSKVGGESPISQRTEERQGAEERSRLRR) form a disordered region. Over residues 404 to 415 (RTEERQGAEERS) the composition is skewed to basic and acidic residues.

Component of the acid-insoluble organic matrix of the aragonitic skeleton (at protein level).

The protein resides in the secreted. This is an uncharacterized protein from Acropora millepora (Staghorn coral).